A 594-amino-acid polypeptide reads, in one-letter code: UvrABC system protein C (594 aa).

The GIY-YIG domain maps to 14 to 91; the sequence is DQPGCYLMKD…IKKYDPKYNI (78 aa). Residues 196-231 form the UVR domain; that stretch reads KEVRSELEIKMYEASEKLEFERAKELRDQIAHIDAI.

This sequence belongs to the UvrC family. In terms of assembly, interacts with UvrB in an incision complex.

It localises to the cytoplasm. The UvrABC repair system catalyzes the recognition and processing of DNA lesions. UvrC both incises the 5' and 3' sides of the lesion. The N-terminal half is responsible for the 3' incision and the C-terminal half is responsible for the 5' incision. This chain is UvrABC system protein C, found in Bacillus cereus (strain G9842).